Reading from the N-terminus, the 511-residue chain is Acidic amino acid decarboxylase GADL1 (511 aa).

Lysine 323 carries the N6-(pyridoxal phosphate)lysine modification.

This sequence belongs to the group II decarboxylase family. As to quaternary structure, homodimer. The cofactor is pyridoxal 5'-phosphate.

It carries out the reaction L-aspartate + H(+) = beta-alanine + CO2. It catalyses the reaction 3-sulfino-L-alanine + H(+) = hypotaurine + CO2. Functionally, catalyzes the decarboxylation of L-aspartate, 3-sulfino-L-alanine (cysteine sulfinic acid), and L-cysteate to beta-alanine, hypotaurine and taurine, respectively. The preferred substrate is L-aspartate. Does not exhibit any decarboxylation activity toward glutamate. The polypeptide is Acidic amino acid decarboxylase GADL1 (gadl1) (Xenopus tropicalis (Western clawed frog)).